Here is a 146-residue protein sequence, read N- to C-terminus: UPF0178 protein BCA_3127 (146 aa).

Belongs to the UPF0178 family.

This chain is UPF0178 protein BCA_3127, found in Bacillus cereus (strain 03BB102).